Consider the following 343-residue polypeptide: CMP-N-acetylneuraminate-beta-galactosamide-alpha-2,3-sialyltransferase 1 (343 aa).

Residues 1–11 lie on the Cytoplasmic side of the membrane; that stretch reads MAPMRKKSTLK. Residues 12–27 traverse the membrane as a helical; Signal-anchor for type II membrane protein segment; sequence LLTLLVLFIFLTSFFL. Asparagine 28 carries an N-linked (GlcNAc...) asparagine glycan. Topologically, residues 28–343 are lumenal; the sequence is NYSHTVVTTA…INKIRIFKGR (316 aa). 3 disulfide bridges follow: cysteine 62–cysteine 67, cysteine 64–cysteine 142, and cysteine 145–cysteine 284. The N-linked (GlcNAc...) asparagine glycan is linked to asparagine 82. Residue glutamine 108 participates in substrate binding. N-linked (GlcNAc...) asparagine glycosylation occurs at asparagine 117. The substrate site is built by asparagine 150, asparagine 173, tyrosine 233, tyrosine 269, glycine 273, glycine 293, histidine 302, and histidine 319. A glycan (N-linked (GlcNAc...) asparagine) is linked at asparagine 326.

It belongs to the glycosyltransferase 29 family. The soluble form derives from the membrane form by proteolytic processing. In terms of tissue distribution, the long isoform is abundant in salivary gland, liver, lung, and colon mucosa. Both long and short forms are detected in submaxillary salivary glands.

The protein resides in the golgi apparatus. It localises to the golgi stack membrane. It is found in the trans-Golgi network membrane. The protein localises to the secreted. The enzyme catalyses a beta-D-galactosyl-(1-&gt;3)-N-acetyl-alpha-D-galactosaminyl derivative + CMP-N-acetyl-beta-neuraminate = an N-acetyl-alpha-neuraminyl-(2-&gt;3)-beta-D-galactosyl-(1-&gt;3)-N-acetyl-alpha-D-galactosaminyl derivative + CMP + H(+). The catalysed reaction is a ganglioside GM1 (d18:1(4E)) + CMP-N-acetyl-beta-neuraminate = a ganglioside GD1a (d18:1(4E)) + CMP + H(+). It catalyses the reaction ganglioside GM1 (d18:1(4E)/18:0) + CMP-N-acetyl-beta-neuraminate = ganglioside GD1a (18:1(4E)/18:0) + CMP + H(+). It carries out the reaction a ganglioside GA1 (d18:1(4E)) + CMP-N-acetyl-beta-neuraminate = a ganglioside GM1b (d18:1(4E)) + CMP + H(+). The enzyme catalyses a ganglioside GD1b + CMP-N-acetyl-beta-neuraminate = a ganglioside GT1b + CMP + H(+). The catalysed reaction is a 3-O-[beta-D-galactosyl-(1-&gt;3)-N-acetyl-alpha-D-galactosaminyl]-L-threonyl-[protein] + CMP-N-acetyl-beta-neuraminate = a 3-O-[N-acetyl-alpha-neuraminyl-(2-&gt;3)-beta-D-galactosyl-(1-&gt;3)-N-acetyl-alpha-D-galactosaminyl]-L-threonyl-[protein] + CMP + H(+). It catalyses the reaction a 3-O-[beta-D-galactosyl-(1-&gt;3)-N-acetyl-alpha-D-galactosaminyl]-L-seryl-[protein] + CMP-N-acetyl-beta-neuraminate = 3-O-[N-acetyl-alpha-neuraminyl-(2-&gt;3)-beta-D-galactosyl-(1-&gt;3)-N-acetyl-alpha-D-galactosaminyl]-L-seryl-[protein] + CMP + H(+). Its pathway is protein modification; protein glycosylation. The protein operates within glycolipid biosynthesis. A beta-galactoside alpha2-&gt;3 sialyltransferase involved in terminal sialylation of glycoproteins and glycolipids. Catalyzes the transfer of sialic acid (N-acetyl-neuraminic acid; Neu5Ac) from the nucleotide sugar donor CMP-Neu5Ac onto acceptor Galbeta-(1-&gt;3)-GalNAc-terminated glycoconjugates through an alpha2-3 linkage. Adds sialic acid to the core 1 O-glycan, Galbeta-(1-&gt;3)-GalNAc-O-Ser/Thr, which is a major structure of mucin-type O-glycans. As part of a homeostatic mechanism that regulates CD8-positive T cell numbers, sialylates core 1 O-glycans of T cell glycoproteins, SPN/CD43 and PTPRC/CD45. Prevents premature apoptosis of thymic CD8-positive T cells prior to peripheral emigration, whereas in the secondary lymphoid organs controls the survival of CD8-positive memory T cells generated following a successful immune response. Transfers sialic acid to asialofetuin, presumably onto Galbeta-(1-&gt;3)-GalNAc-O-Ser. Sialylates GM1a, GA1 and GD1b gangliosides to form GD1a, GM1b and GT1b, respectively. This chain is CMP-N-acetylneuraminate-beta-galactosamide-alpha-2,3-sialyltransferase 1 (ST3GAL1), found in Sus scrofa (Pig).